Consider the following 27-residue polypeptide: Ganodermin (27 aa).

In terms of biological role, has antifungal activity against B.cinera, F.oxysporum and P.piricola with IC(50) values of 15.2 uM, 12.4 uM and 18.1 uM, respectively. Lacks hemagglutinating activity towards rabbit erythrocytes. Lacks deoxyribonuclease, ribonuclease and protease inhibitory activities. The polypeptide is Ganodermin (Ganoderma lucidum (Ling zhi medicinal fungus)).